We begin with the raw amino-acid sequence, 225 residues long: Elongation factor 1-beta (225 aa).

Residues 2–84 (GFGDLKSPAG…ALGKYGPADV (83 aa)) enclose the GST C-terminal domain. Residue Lys-7 is modified to N6-acetyllysine. Phosphoserine occurs at positions 8 and 42. The disordered stretch occupies residues 78-115 (KYGPADVEDTTGSGATDSKDDDDIDLFGSDDEEESEEA). Phosphothreonine occurs at positions 88 and 93. Phosphoserine occurs at positions 95 and 106. Residues 96 to 113 (KDDDDIDLFGSDDEEESE) show a composition bias toward acidic residues. Lys-147 is covalently cross-linked (Glycyl lysine isopeptide (Lys-Gly) (interchain with G-Cter in SUMO2)). Ser-174 is subject to Phosphoserine.

Belongs to the EF-1-beta/EF-1-delta family. As to quaternary structure, EF-1 is composed of 4 subunits: alpha, beta (alpha subunit of the eEF1B subcomplex), delta (beta subunit of the eEF1B subcomplex), and gamma (gamma subunit of the eEF1B subcomplex). Interacts with elongation factor EEF1A1. Phosphorylation affects the GDP/GTP exchange rate.

Its function is as follows. Catalytic subunit of the guanine nucleotide exchange factor (GEF) (eEF1B subcomplex) of the eukaryotic elongation factor 1 complex (eEF1). Stimulates the exchange of GDP for GTP on elongation factor 1A (eEF1A), probably by displacing GDP from the nucleotide binding pocket in eEF1A. The polypeptide is Elongation factor 1-beta (EEF1B2) (Homo sapiens (Human)).